The primary structure comprises 262 residues: Putative ankyrin repeat protein R848 (262 aa).

7 ANK repeats span residues 8-37 (SNDY…NVTH), 38-67 (DNNY…DIRD), 68-97 (CRDY…NIRA), 99-127 (DDYA…NFRA), 128-157 (DNDY…DIRA), 159-187 (DDYA…DFRS), and 189-217 (NNAS…DVNT).

The chain is Putative ankyrin repeat protein R848 from Acanthamoeba polyphaga (Amoeba).